The sequence spans 274 residues: 4-deoxy-L-threo-5-hexosulose-uronate ketol-isomerase (274 aa).

4 residues coordinate Zn(2+): histidine 192, histidine 194, glutamate 199, and histidine 241.

This sequence belongs to the KduI family. Zn(2+) is required as a cofactor.

The catalysed reaction is 5-dehydro-4-deoxy-D-glucuronate = 3-deoxy-D-glycero-2,5-hexodiulosonate. It functions in the pathway glycan metabolism; pectin degradation; 2-dehydro-3-deoxy-D-gluconate from pectin: step 4/5. Functionally, catalyzes the isomerization of 5-dehydro-4-deoxy-D-glucuronate to 3-deoxy-D-glycero-2,5-hexodiulosonate. The chain is 4-deoxy-L-threo-5-hexosulose-uronate ketol-isomerase from Agrobacterium fabrum (strain C58 / ATCC 33970) (Agrobacterium tumefaciens (strain C58)).